Here is a 351-residue protein sequence, read N- to C-terminus: Soluble TNF receptor II (351 aa).

The N-terminal stretch at 1-19 (MKSVLYSYILFLSCIIING) is a signal peptide. 2 TNFR-Cys repeats span residues 31 to 67 (KCKDNEYNRHNLCCLSCPPGTYASRLCDSKTNTNTQC) and 69 to 110 (PCGS…NRIC). 6 cysteine pairs are disulfide-bonded: C32–C43, C44–C57, C47–C67, C70–C85, C88–C102, and C92–C110. Residues N103, N191, and N250 are each glycosylated (N-linked (GlcNAc...) asparagine; by host).

It belongs to the orthopoxvirus OPG002 family.

Its subcellular location is the secreted. Its function is as follows. Inhibits host immune defense by binding to host TNF and various chemokines in the extracellular space. Binds host CC chemokines (beta chemokines) and CXC chemokines (alpha chemokines). The chain is Soluble TNF receptor II (OPG002) from Bos taurus (Bovine).